A 362-amino-acid polypeptide reads, in one-letter code: Adenosine deaminase (362 aa).

Residues His19 and His21 each contribute to the Zn(2+) site. Substrate is bound by residues His21, Asp23, and Gly181. Zn(2+) is bound at residue His208. The Proton donor role is filled by Glu211. Asp300 is a binding site for Zn(2+).

It belongs to the metallo-dependent hydrolases superfamily. Adenosine and AMP deaminases family. Adenosine deaminase subfamily. The cofactor is Zn(2+).

The enzyme catalyses adenosine + H2O + H(+) = inosine + NH4(+). It carries out the reaction 2'-deoxyadenosine + H2O + H(+) = 2'-deoxyinosine + NH4(+). In terms of biological role, catalyzes the hydrolytic deamination of adenosine and 2-deoxyadenosine. The protein is Adenosine deaminase of Mycolicibacterium vanbaalenii (strain DSM 7251 / JCM 13017 / BCRC 16820 / KCTC 9966 / NRRL B-24157 / PYR-1) (Mycobacterium vanbaalenii).